We begin with the raw amino-acid sequence, 123 residues long: Mediator of RNA polymerase II transcription subunit 9 (123 aa).

The stretch at 95 to 123 (WQLHIQEKKIELEKKTKHLQRLRESIQKQ) forms a coiled coil.

This sequence belongs to the Mediator complex subunit 9 family. As to quaternary structure, component of the Mediator complex.

It localises to the nucleus. Component of the Mediator complex, a coactivator involved in the regulated transcription of nearly all RNA polymerase II-dependent genes. Mediator functions as a bridge to convey information from gene-specific regulatory proteins to the basal RNA polymerase II transcription machinery. Mediator is recruited to promoters by direct interactions with regulatory proteins and serves as a scaffold for the assembly of a functional preinitiation complex with RNA polymerase II and the general transcription factors. The polypeptide is Mediator of RNA polymerase II transcription subunit 9 (CSE2) (Kluyveromyces lactis (strain ATCC 8585 / CBS 2359 / DSM 70799 / NBRC 1267 / NRRL Y-1140 / WM37) (Yeast)).